The sequence spans 354 residues: Regulatory protein RapD (354 aa).

TPR repeat units follow at residues 64-105 (FENQ…VKTA), 107-126 (KHAV…IHNT), 130-163 (ADLY…YLHQ), 171-204 (ITCK…TQQL), 211-244 (CHAY…QEFE), and 321-353 (IEAW…FIMR).

The protein belongs to the Rap family.

The protein resides in the cytoplasm. The sequence is that of Regulatory protein RapD (rapD) from Bacillus subtilis (strain 168).